A 227-amino-acid chain; its full sequence is Claudin-15 (227 aa).

Position 1 (Met-1) is a topological domain, cytoplasmic. A helical membrane pass occupies residues 2 to 24; that stretch reads SIAVETFGFFMSALGLLMLGVTL. The Extracellular portion of the chain corresponds to 25–74; sequence PNSYWRVSTVHGNVITTNTIFENLWYSCATDSLGVSNCWDFPSMLALSGY. A disulfide bridge connects residues Cys-52 and Cys-62. A helical membrane pass occupies residues 75 to 99; it reads VQGCRALMITAILLGFLGLFLGMVG. The Cytoplasmic portion of the chain corresponds to 100–115; the sequence is LRCTNVGNIDLSRKAK. Ser-111 is subject to Phosphoserine. A helical transmembrane segment spans residues 116–140; it reads LLAIAGAFHILAGACGMVAISWYAV. Topologically, residues 141 to 159 are extracellular; sequence NITTDFFNPLYVGTKYELG. Residues 146–147 are important for the formation of tight-junction strand-like structures; the sequence is FF. Residues 160–182 traverse the membrane as a helical segment; that stretch reads SALYLGWSASLLSILGGICVFST. The Cytoplasmic portion of the chain corresponds to 183–227; the sequence is CCCDSKEDPATRVGLPYKPSTVVTARATSDESDVSFGKYGKNAYV. Phosphoserine occurs at positions 211, 214, and 217.

Belongs to the claudin family. In terms of assembly, can form homo- and heteropolymeric tight junction strands. Palmitoylated. In terms of tissue distribution, detected in kidney, jejunum and colon (at protein level).

It localises to the cell junction. Its subcellular location is the tight junction. It is found in the cell membrane. It catalyses the reaction Na(+)(in) = Na(+)(out). It carries out the reaction K(+)(in) = K(+)(out). The catalysed reaction is Cs(+)(in) = Cs(+)(out). The enzyme catalyses Rb(+)(in) = Rb(+)(out). It catalyses the reaction Li(+)(in) = Li(+)(out). It carries out the reaction NH4(+)(in) = NH4(+)(out). The catalysed reaction is methylamine(out) = methylamine(in). The enzyme catalyses H2O(in) = H2O(out). Its function is as follows. Forms paracellular channels: polymerizes in tight junction strands with cation- and water-selective channels through the strands, conveying epithelial permeability in a process known as paracellular tight junction permeability. In intestinal epithelium, allows for sodium and water fluxes from the peritoneal side to the lumen of the intestine to regulate nutrient absorption and intestinal morphogenesis. This chain is Claudin-15, found in Rattus norvegicus (Rat).